The chain runs to 1006 residues: GATA zinc finger domain-containing protein 7 (1006 aa).

Residues 55-70 show a composition bias toward low complexity; it reads SSSNNFINNHHNNQSS. Disordered stretches follow at residues 55 to 116, 128 to 248, 381 to 499, 528 to 638, and 657 to 800; these read SSSN…APNL, PFQN…DPFY, NAKK…PLST, STSG…SSNS, and YNSN…NYHD. The span at 71 to 86 shows a compositional bias: polar residues; that stretch reads DIHSISQSTPNLSTLI. 2 stretches are compositionally biased toward low complexity: residues 87–110 and 128–158; these read SSSS…NSSS and PFQN…CNNS. Residues 159–168 are compositionally biased toward polar residues; that stretch reads PVSSSTNYIP. The segment covering 169–180 has biased composition (low complexity); sequence NNSTSNVVLNSS. Polar residues predominate over residues 181–190; it reads IPTTSPNVLS. Composition is skewed to low complexity over residues 205–241 and 388–410; these read NNNN…NNNN and TNTN…NNNN. A compositionally biased stretch (polar residues) spans 411–426; sequence IQQANVNTSPISTSTT. 2 stretches are compositionally biased toward low complexity: residues 427–456 and 468–496; these read PNNN…QQAQ and SITP…GASP. Positions 528–539 are enriched in polar residues; sequence STSGMLSTTNPY. Over residues 540-557 the composition is skewed to low complexity; it reads THHSPNTSSTVSSSVTSP. Residues 558–589 are compositionally biased toward polar residues; sequence LINQYGTNPTLTNNHSFYGSLASNQNTGASDG. Composition is skewed to low complexity over residues 590–601 and 619–638; these read NNNNNNNNNNNN and SSNP…SSNS. Residues 662–680 are compositionally biased toward polar residues; that stretch reads GSGMTTPQSLGHSPSHNDY. 2 stretches are compositionally biased toward low complexity: residues 681–706 and 713–785; these read NSNN…NSNN and SNSS…SSNN. The segment at 842–867 adopts a GATA-type zinc-finger fold; sequence CHNCGTKNTPEWRRGPSGPATLCNAC. The segment at 925–957 is disordered; it reads NNASSSSSSSSSSSSSSSSSSSTSSYSSSSYNI. Positions 928–954 are enriched in low complexity; it reads SSSSSSSSSSSSSSSSSSSTSSYSSSS.

This Dictyostelium discoideum (Social amoeba) protein is GATA zinc finger domain-containing protein 7 (gtaG).